A 261-amino-acid chain; its full sequence is MVKGEKGPKGKKITLKVARNCIKITFDGKKRLDLSKMGITTFPKCILRLSDMDELDLSRNLIRKIPDSISKFQNLRWLDLHSNYIDKLPESIGQMTSLLYLNVSNNRLTSNGLPVELKQLKNIRAVNLGLNHLDSVPTTLGALKELHEVGLHDNLLNNIPVSISKLPKLKKLNIKRNPFPKPGESEIFIDSIRRLENLYVVEEKDLCAACLRKCQNARDNLNRIKNMATTTPRKTIFPNLISPNSMAKDSWEDWRIRLTSS.

7 LRR repeats span residues 28–49 (GKKR…ILRL), 51–72 (DMDE…ISKF), 74–95 (NLRW…IGQM), 97–118 (SLLY…VELK), 122–144 (NIRA…GALK), 145–167 (ELHE…SKLP), and 168–189 (KLKK…EIFI).

The protein localises to the cytoplasm. May be involved in the regulation of spermatogenesis and sperm maturation. The polypeptide is Leucine-rich repeat-containing protein 18 (LRRC18) (Homo sapiens (Human)).